Consider the following 613-residue polypeptide: RUN domain-containing protein 1 (613 aa).

The interval 15–36 is disordered; it reads AAVGPKAKDEEEEEEEPLPPCE. Threonine 54 bears the Phosphothreonine mark. Residues 57–69 show a composition bias toward low complexity; it reads LEEATAEEPGAAP. 3 disordered regions span residues 57 to 79, 140 to 177, and 305 to 330; these read LEEATAEEPGAAPGSPPDSPGRT, YEGPGDPASDEGDGLPGDRPWLRGEDQSEQEKQERLET, and GKTGNGCSRTGSSRTPPGNSKTKAED. A phosphoserine mark is found at serine 71 and serine 75. Basic and acidic residues predominate over residues 159–177; it reads PWLRGEDQSEQEKQERLET. A coiled-coil region spans residues 160 to 235; that stretch reads WLRGEDQSEQ…IKKLDMNLNE (76 aa). Polar residues predominate over residues 309-325; sequence NGCSRTGSSRTPPGNSK. In terms of domain architecture, RUN spans 421–602; sequence ELTMAVRKEL…LKFSLPVDLA (182 aa). Serine 497 carries the phosphoserine modification.

Its function is as follows. May play a role as p53/TP53 inhibitor and thus may have oncogenic activity. The chain is RUN domain-containing protein 1 (RUNDC1) from Homo sapiens (Human).